Here is a 664-residue protein sequence, read N- to C-terminus: Metal-nicotianamine transporter YSL2 (664 aa).

14 consecutive transmembrane segments (helical) span residues 31 to 51, 55 to 75, 103 to 123, 147 to 167, 209 to 229, 268 to 288, 314 to 334, 378 to 398, 409 to 429, 457 to 477, 496 to 516, 549 to 569, 594 to 614, and 629 to 649; these read ITVR…VICL, LTTG…FVFL, CAVA…LLGL, GVGW…VVLV, GFIK…FYSG, LVNL…WPLI, FICI…ILFF, IPLW…IIAI, FVLV…YGAG, VVAG…SADL, VAQA…FFLF, SALP…AVAA, FLVG…VYVW, and VASG…LLAL.

This sequence belongs to the YSL (TC 2.A.67.2) family. Expressed in roots, leaves and weakly in shoots. Restricted to the veins, to the central cylinder of the young roots and to the pericycle and the endodermis cells facing the meta-xylem tubes in older roots. Expressed in the vasculature of sepals, petals, anthers, stigma and siliques, but not in developing seeds or in meristematic zones.

Its subcellular location is the cell membrane. In terms of biological role, may be involved in the lateral transport of nicotianamine-chelated metals in the vasculature. The sequence is that of Metal-nicotianamine transporter YSL2 (YSL2) from Arabidopsis thaliana (Mouse-ear cress).